The following is a 156-amino-acid chain: Transcription elongation factor GreA (156 aa).

A coiled-coil region spans residues 1–32 (MKKVRLTREGYEKLKKELEDLKRKFMYEISER).

It belongs to the GreA/GreB family.

Its function is as follows. Necessary for efficient RNA polymerase transcription elongation past template-encoded arresting sites. The arresting sites in DNA have the property of trapping a certain fraction of elongating RNA polymerases that pass through, resulting in locked ternary complexes. Cleavage of the nascent transcript by cleavage factors such as GreA or GreB allows the resumption of elongation from the new 3'terminus. GreA releases sequences of 2 to 3 nucleotides. The sequence is that of Transcription elongation factor GreA from Thermotoga sp. (strain RQ2).